Here is a 345-residue protein sequence, read N- to C-terminus: Aminopeptidase YpdE (345 aa).

2 residues coordinate a divalent metal cation: H62 and D166. Catalysis depends on E198, which acts as the Proton acceptor. A divalent metal cation is bound by residues E199, D221, and H308.

The protein belongs to the peptidase M42 family. The cofactor is Co(2+). It depends on Ni(2+) as a cofactor. Requires Mn(2+) as cofactor. Cu(2+) is required as a cofactor.

In terms of biological role, has a broad aminopeptidase activity on non-blocked peptides by progressively cleaving amino acids off the peptide substrate. Aminopeptidase activity stops at the residue before the first proline in the peptide. Cannot cleave when proline is the first N-terminal residue. The protein is Aminopeptidase YpdE (ypdE) of Escherichia coli (strain K12).